The primary structure comprises 241 residues: MAFSPNPLSLSVPDPAFESWLRDSGYLELLDHRTSAAAAAASSSASVSSSAAATSAASDDVVSSITGGFFASLLSRLVTVSSLLTINPFSKLSADDFSGDTTPWTTGFIGNCDSYSFPSSSQQARMRVHENIKRFARNYATLFIVFFACALYQMPLALVGLLGSLALWELFKYCSDKWKFDRHPSMRKLSIGIGQCATAVLLTFLNVQMALFSALAISYSVMILHAGFRKLTPSKKPTRGR.

3 helical membrane-spanning segments follow: residues 142 to 162 (LFIV…VGLL), 189 to 205 (LSIG…LTFL), and 209 to 228 (MALF…HAGF).

The protein belongs to the PRA1 family.

It localises to the endoplasmic reticulum membrane. Its function is as follows. May be involved in both secretory and endocytic intracellular trafficking in the endosomal/prevacuolar compartments. The protein is PRA1 family protein H (PRA1H) of Arabidopsis thaliana (Mouse-ear cress).